The primary structure comprises 375 residues: Secreted LysM effector Vd4LysM (375 aa).

The N-terminal stretch at 1 to 24 (MPSVTISSTMLAGLLLMLVPASSA) is a signal peptide. Residues 57 to 104 (SWWWDNEGQIPCANMPAEWGITMQDFLRWNPSITSSCGNFLNGRSYCV) enclose the LysM 1 domain. The tract at residues 108–139 (GEEPPVPGTPTTTTAPATTTKPSNGITTPQPI) is disordered. Residues 116–129 (TPTTTTAPATTTKP) are compositionally biased toward low complexity. The LysM 2 domain maps to 149–195 (KFHYISEGDRCQDILSYQKITLADFFKWNPAVKSDCSGLWSKTNACV). Over residues 206–217 (TTTTKPATPTTP) the composition is skewed to low complexity. Positions 206 to 225 (TTTTKPATPTTPSNGITTPQ) are disordered. The LysM 3 domain occupies 237 to 283 (KFHYISEGDRCQDILSYQKITQADFFKWNPAVKSDCSGLWSKTHACV). The tract at residues 287-317 (GGQAPPPTPTTTKPTTTKPPGNGVTTPTPTQ) is disordered. Residues 296 to 317 (TTTKPTTTKPPGNGVTTPTPTQ) show a composition bias toward low complexity. A LysM 4 domain is found at 326-372 (KFHFVSPGNTCQQIVSYQKITMANFVKWNSGAGSGCNNLWGNTHACV).

Belongs to the secreted LysM effector family.

Might have a role in sequestration of chitin oligosaccharides (breakdown products of fungal cell walls that are released during invasion and act as triggers of host immunity) to dampen host defense. Does not play an important role during host colonization. The polypeptide is Secreted LysM effector Vd4LysM (Verticillium dahliae (strain VdLs.17 / ATCC MYA-4575 / FGSC 10137) (Verticillium wilt)).